A 90-amino-acid chain; its full sequence is Small ribosomal subunit protein uS15 (90 aa).

This sequence belongs to the universal ribosomal protein uS15 family. In terms of assembly, part of the 30S ribosomal subunit. Forms a bridge to the 50S subunit in the 70S ribosome, contacting the 23S rRNA.

Its function is as follows. One of the primary rRNA binding proteins, it binds directly to 16S rRNA where it helps nucleate assembly of the platform of the 30S subunit by binding and bridging several RNA helices of the 16S rRNA. Functionally, forms an intersubunit bridge (bridge B4) with the 23S rRNA of the 50S subunit in the ribosome. The chain is Small ribosomal subunit protein uS15 from Herpetosiphon aurantiacus (strain ATCC 23779 / DSM 785 / 114-95).